Consider the following 207-residue polypeptide: Ras-related protein RABH1d (207 aa).

16–23 serves as a coordination point for GTP; sequence GDQSVGKT. Residues 38–46 carry the Effector region motif; that stretch reads YQATIGIDF. Residues 64 to 68, 122 to 125, and 152 to 153 contribute to the GTP site; these read DTAGQ, NKTD, and SA. Residues Cys205 and Cys207 are each lipidated (S-geranylgeranyl cysteine). Residue Cys207 is modified to Cysteine methyl ester.

This sequence belongs to the small GTPase superfamily. Rab family.

The protein localises to the golgi apparatus membrane. In terms of biological role, protein transport. Regulator of membrane traffic from the Golgi apparatus towards the endoplasmic reticulum (ER). This Arabidopsis thaliana (Mouse-ear cress) protein is Ras-related protein RABH1d (RABH1D).